We begin with the raw amino-acid sequence, 422 residues long: Phosphoribosylamine--glycine ligase (422 aa).

Residues 107-314 (KAFMQRHGIP…LFDVLDRAID (208 aa)) enclose the ATP-grasp domain. Residue 133 to 194 (VDREGAPIVI…EEFLAGEEAS (62 aa)) coordinates ATP. The Mg(2+) site is built by glutamate 284 and asparagine 286.

The protein belongs to the GARS family. The cofactor is Mg(2+). Mn(2+) serves as cofactor.

It carries out the reaction 5-phospho-beta-D-ribosylamine + glycine + ATP = N(1)-(5-phospho-beta-D-ribosyl)glycinamide + ADP + phosphate + H(+). It functions in the pathway purine metabolism; IMP biosynthesis via de novo pathway; N(1)-(5-phospho-D-ribosyl)glycinamide from 5-phospho-alpha-D-ribose 1-diphosphate: step 2/2. This Ralstonia nicotianae (strain ATCC BAA-1114 / GMI1000) (Ralstonia solanacearum) protein is Phosphoribosylamine--glycine ligase.